The sequence spans 348 residues: NADH-ubiquinone oxidoreductase chain 2 (348 aa).

The next 10 membrane-spanning stretches (helical) occupy residues 3–23 (PIIISMIGFTIILGTTIVLMS), 25–45 (HWFMIWIGFEMNMLAIIPVLM), 59–79 (YFLTQTTASMLMLLSVMINLI), 93–115 (TASTIMTLSLAMKLGLSPFHFWV), 149–169 (LNMTMLLTMSILSVVMGGWGG), 178–198 (ILAFSSIAHMGWMTAIIMFNP), 201–221 (TLLNLLLYILMTTTIFMILIF), 239–259 (IMTVIMLTILMSLGGLPPLSG), 276–296 (IALALIMAMSALLNLYFYMRL), and 326–346 (LPTLTIMSTLLLPLTPMMMML).

It belongs to the complex I subunit 2 family. As to quaternary structure, core subunit of respiratory chain NADH dehydrogenase (Complex I) which is composed of 45 different subunits. Interacts with TMEM242.

It localises to the mitochondrion inner membrane. It catalyses the reaction a ubiquinone + NADH + 5 H(+)(in) = a ubiquinol + NAD(+) + 4 H(+)(out). Core subunit of the mitochondrial membrane respiratory chain NADH dehydrogenase (Complex I) which catalyzes electron transfer from NADH through the respiratory chain, using ubiquinone as an electron acceptor. Essential for the catalytic activity and assembly of complex I. This chain is NADH-ubiquinone oxidoreductase chain 2, found in Thyroptera tricolor (Spix's disk-winged bat).